The chain runs to 309 residues: Protein FdhE homolog (309 aa).

The protein belongs to the FdhE family.

It localises to the cytoplasm. In terms of biological role, necessary for formate dehydrogenase activity. The chain is Protein FdhE homolog from Pectobacterium atrosepticum (strain SCRI 1043 / ATCC BAA-672) (Erwinia carotovora subsp. atroseptica).